A 210-amino-acid chain; its full sequence is Na(+)-translocating NADH-quinone reductase subunit D (210 aa).

6 consecutive transmembrane segments (helical) span residues 14–34 (PIINNNPIALQILGVCSALAV), 42–62 (LVMTIALTAVTAFSNLFISLI), 72–92 (IIVQMTIIASLVIVVDQVLQA), 96–116 (AISKQLSVFVGLIITNCIVMG), 131–151 (FMDGIGNGLGYGAILLSVGVV), and 178–198 (NGLLLLPPSAFFLIGGLIWLI).

Belongs to the NqrDE/RnfAE family. Composed of six subunits; NqrA, NqrB, NqrC, NqrD, NqrE and NqrF.

The protein localises to the cell inner membrane. The catalysed reaction is a ubiquinone + n Na(+)(in) + NADH + H(+) = a ubiquinol + n Na(+)(out) + NAD(+). Its function is as follows. NQR complex catalyzes the reduction of ubiquinone-1 to ubiquinol by two successive reactions, coupled with the transport of Na(+) ions from the cytoplasm to the periplasm. NqrA to NqrE are probably involved in the second step, the conversion of ubisemiquinone to ubiquinol. This is Na(+)-translocating NADH-quinone reductase subunit D from Shewanella frigidimarina (strain NCIMB 400).